The chain runs to 294 residues: Endonuclease 3 (294 aa).

Residues methionine 1 to cysteine 24 form the signal peptide. Positions 25 and 30 each coordinate a divalent metal cation. A substrate-binding site is contributed by tryptophan 25–histidine 30. Cysteine 34 and cysteine 65 are disulfide-bonded. The a divalent metal cation site is built by aspartate 69 and histidine 84. Residues aspartate 69–proline 75, histidine 84–aspartate 87, and asparagine 94–arginine 99 contribute to the substrate site. Intrachain disulfides connect cysteine 93–cysteine 241, cysteine 101–cysteine 106, and cysteine 221–cysteine 228. Residues asparagine 113 and tyrosine 131 each coordinate substrate. N-linked (GlcNAc...) asparagine glycosylation occurs at asparagine 113. Asparagine 132 is a glycosylation site (N-linked (GlcNAc...) asparagine). A divalent metal cation-binding residues include histidine 142, aspartate 146, histidine 152, histidine 176, and aspartate 180. A substrate binding region spans residues histidine 142–tyrosine 191. Asparagine 193, asparagine 224, and asparagine 247 each carry an N-linked (GlcNAc...) asparagine glycan. The propeptide at glycine 279 to alanine 294 is removed in mature form.

It belongs to the nuclease type I family. As to quaternary structure, monomer. Zn(2+) is required as a cofactor. Mn(2+) serves as cofactor.

It catalyses the reaction Endonucleolytic cleavage to 5'-phosphomononucleotide and 5'-phosphooligonucleotide end-products.. Its function is as follows. Endonuclease that can use RNA and single-stranded DNA as substrates. In contradiction with PubMed:23620482, cannot hydrolyze single-stranded DNA and does not cleave mismatches. The chain is Endonuclease 3 from Arabidopsis thaliana (Mouse-ear cress).